The sequence spans 874 residues: MTLQSPLTFRDEQINIGELKQELEKFSSYQKEEFLQHHPVTNLVLSRAEYMDLLLNRLWQHFGFKDIHNISLVAVGGYGRGELHPLSDIDILILSNNKLPNALEAKISEFITLLWDLRLEVGHAVRTVDECAEIGRADLTVATNLQEARLLCGSEDTFQALKKVVLSDSFWPSETFYRAKIQEQRERHARYHDTTYNLEPDIKSTPGGLRDIHTLSWVARRHFGATSLLEMSRYGFLTDAEYRELVECQDILWRVRFALHIELRRYDNRLTFAHQAQVAEHLGYVGEGNRGVEMMMKEFYRTLRRVAELNKMLLKLFDQAIINGGASEDAEIIDEDFQRRGALIEARKPALFQARPETILDMFLHIANDSSIEGVSPPTLRQLRTARRRLNKFLHTIPEAREKFMALCRHPNALHKAFSLMHKLGVLAAYLPQWSQIVGQMQFDLFHVYTVDEHSIRLLKHINTFSYAENHSKHPICCEVYPRIQKKELLILAAIFHDIGKGRGGDHSVIGEGEAYDFCIEHGLSKPEAKLVSWLVRHHLLMSVTAQRRDIYDPDVITEFAKQVRDEEYLEYLVCLTVADICATNPELWNSWKRTLLAELFYSTQRALRRGLENPVDVRERIRHNQQMASAQLRKEGFSAREIEVLWQRFKADYFLRHTHKQIAWHCENLLRMEDTSKPLVLISKKATRGGTEVFVYSPDQPALFATVVAELDRRNFNVHDAQIMTSKDGYVLDTFMVLDQHGKAIEEGRHSAVTKHITHVLEDGRPTKIKTRRTPNKLQHFNVKTKVDFLPTKSKKRTLMEFVALDTPGLLAKVGRTFADLGINLHAAKITTIGERAEDLFILTSEAGGRLSEEQQTELREKLIEKLSDSVSA.

The tract at residues Met1–Ile332 is uridylyltransferase. The tract at residues Ile333–Thr692 is uridylyl-removing. One can recognise an HD domain in the interval Val451–Leu573. ACT domains lie at Glu693 to Asn777 and Leu800 to Ala874.

This sequence belongs to the GlnD family. It depends on Mg(2+) as a cofactor.

It catalyses the reaction [protein-PII]-L-tyrosine + UTP = [protein-PII]-uridylyl-L-tyrosine + diphosphate. The catalysed reaction is [protein-PII]-uridylyl-L-tyrosine + H2O = [protein-PII]-L-tyrosine + UMP + H(+). Its activity is regulated as follows. Uridylyltransferase (UTase) activity is inhibited by glutamine, while glutamine activates uridylyl-removing (UR) activity. Modifies, by uridylylation and deuridylylation, the PII regulatory proteins (GlnB and homologs), in response to the nitrogen status of the cell that GlnD senses through the glutamine level. Under low glutamine levels, catalyzes the conversion of the PII proteins and UTP to PII-UMP and PPi, while under higher glutamine levels, GlnD hydrolyzes PII-UMP to PII and UMP (deuridylylation). Thus, controls uridylylation state and activity of the PII proteins, and plays an important role in the regulation of nitrogen assimilation and metabolism. The sequence is that of Bifunctional uridylyltransferase/uridylyl-removing enzyme from Vibrio campbellii (strain ATCC BAA-1116).